Here is a 343-residue protein sequence, read N- to C-terminus: Endoglucanase C (343 aa).

Glu-140 serves as the catalytic Proton donor. Glu-280 functions as the Nucleophile in the catalytic mechanism.

It belongs to the glycosyl hydrolase 5 (cellulase A) family.

The enzyme catalyses Endohydrolysis of (1-&gt;4)-beta-D-glucosidic linkages in cellulose, lichenin and cereal beta-D-glucans.. It functions in the pathway glycan metabolism; cellulose degradation. In terms of biological role, this enzyme catalyzes the endohydrolysis of 1,4-beta-glucosidic linkages in cellulose, lichenin and cereal beta-D-glucans. This is Endoglucanase C (celC) from Acetivibrio thermocellus (Hungateiclostridium thermocellum).